The primary structure comprises 366 residues: Class I histocompatibility antigen, Gogo-C*0201 alpha chain (366 aa).

An N-terminal signal peptide occupies residues 1 to 24 (MRVMAPRTLILPLSGALALTETWA). Positions 25-114 (GSHSMRYFYT…LRGYYNQSED (90 aa)) are alpha-1. Residues 25–308 (GSHSMRYFYT…EPSSQPTIPI (284 aa)) are Extracellular-facing. The N-linked (GlcNAc...) asparagine glycan is linked to Asn-110. The tract at residues 115–206 (GSHTLQSMYG…ENGKETLQRA (92 aa)) is alpha-2. 2 disulfide bridges follow: Cys-125/Cys-188 and Cys-227/Cys-283. The interval 207-298 (EPPKTHVTHH…GLPEPLTLRW (92 aa)) is alpha-3. One can recognise an Ig-like C1-type domain in the interval 209-297 (PKTHVTHHPL…EGLPEPLTLR (89 aa)). The interval 299–308 (EPSSQPTIPI) is connecting peptide. The helical transmembrane segment at 309–333 (VGIVVGLAVLVVLAVLGAVVTAMMC) threads the bilayer. The Cytoplasmic segment spans residues 334-366 (RRKSSGGKGGSCSQAACSNSAQGSDESLITCKA).

The protein belongs to the MHC class I family. As to quaternary structure, heterodimer of an alpha chain and a beta chain (beta-2-microglobulin).

Its subcellular location is the membrane. Functionally, involved in the presentation of foreign antigens to the immune system. The polypeptide is Class I histocompatibility antigen, Gogo-C*0201 alpha chain (Gorilla gorilla gorilla (Western lowland gorilla)).